Here is a 1195-residue protein sequence, read N- to C-terminus: Zinc finger and BTB domain-containing protein 38 (1195 aa).

Residues 33–100 (CDVTIIVEDT…IYSSTVVVKR (68 aa)) enclose the BTB domain. A Glycyl lysine isopeptide (Lys-Gly) (interchain with G-Cter in SUMO2) cross-link involves residue K43. S130 carries the phosphoserine modification. Residues K145, K148, K151, and K259 each participate in a glycyl lysine isopeptide (Lys-Gly) (interchain with G-Cter in SUMO2) cross-link. The segment at 264-334 (RKPKTFSIPQ…QSSDVPGPPA (71 aa)) is disordered. Residues 270–280 (SIPQDSDSATE) are compositionally biased toward polar residues. Positions 300 to 523 (PAAVLTRSKS…RRYQCIFCLE (224 aa)) are interaction with CBFA2T3. The residue at position 309 (S309) is a Phosphoserine. Over residues 314–323 (GDVHFSREDE) the composition is skewed to basic and acidic residues. The C2H2-type 1 zinc finger occupies 342–364 (YNCSCCSKAFDSSTLLSAHMQLH). The C2H2-type 2; degenerate zinc-finger motif lies at 371 to 395 (LVCKYCNKQFTTLNRLDRHEQICMR). C2H2-type zinc fingers lie at residues 460-482 (YSCV…ANVH), 488-510 (YPCH…EIWH), and 516-539 (YQCI…KSFH). Residues K550, K557, K754, K758, K763, K804, K814, K821, K842, K850, and K857 each participate in a glycyl lysine isopeptide (Lys-Gly) (interchain with G-Cter in SUMO2) cross-link. A disordered region spans residues 745-804 (SDPAVSQSLKDDSKPEPDKVGRFASRPKSIKEKKKTTSHTRGEIPEESNYVADPGGSLSK). Over residues 753 to 765 (LKDDSKPEPDKVG) the composition is skewed to basic and acidic residues. 2 disordered regions span residues 871-891 (QEEP…PLGL) and 903-922 (FDDA…YYNY). Residues K923, K964, K969, K977, K981, K991, K1017, and K1026 each participate in a glycyl lysine isopeptide (Lys-Gly) (interchain with G-Cter in SUMO2) cross-link. C2H2-type zinc fingers lie at residues 1010–1032 (YACE…MRCH), 1038–1060 (YQCK…ERIH), 1066–1088 (FVCQ…ERIH), 1094–1116 (YHCQ…EQRH), and 1125–1147 (YACF…QKKH). Residues K1109, K1132, K1135, K1150, and K1183 each participate in a glycyl lysine isopeptide (Lys-Gly) (interchain with G-Cter in SUMO2) cross-link.

Interacts with CBFA2T3. Interacts with ZBTB4. Interacts with RBBP6. Ubiquitinated by RBBP6; leading to its degradation by the proteasome.

It localises to the nucleus. It is found in the chromosome. Its function is as follows. Transcriptional regulator with bimodal DNA-binding specificity. Binds with a higher affinity to methylated CpG dinucleotides in the consensus sequence 5'-CGCG-3' but can also bind to E-box elements (5'-CACGTG-3'). Can also bind specifically to a single methyl-CpG pair. Represses transcription in a methyl-CpG-dependent manner. Plays an important role in regulating DNA replication and common fragile sites (CFS) stability in a RBBP6- and MCM10-dependent manner; represses expression of MCM10 which plays an important role in DNA-replication. Acts as a transcriptional activator. May be involved in the differentiation and/or survival of late postmitotic neurons. The polypeptide is Zinc finger and BTB domain-containing protein 38 (Homo sapiens (Human)).